A 331-amino-acid polypeptide reads, in one-letter code: NAD-dependent protein deacetylase HST2 (331 aa).

Positions 1–262 constitute a Deacetylase sirtuin-type domain; the sequence is MPSLDDILKP…EKLCTLLGLD (262 aa). NAD(+) is bound by residues 26 to 46 and 109 to 112; these read GAGI…TGLY and QNID. His129 acts as the Proton acceptor in catalysis. Zn(2+) contacts are provided by Cys137, Cys140, Cys161, and Cys164. Residues 201–203, 226–228, and Cys248 contribute to the NAD(+) site; these read GTS and NKE. Residues 276-331 are a coiled coil; sequence YSKAETKETKMHEIEDKLKEEAHLKEDKHTTKVDKKEKQNDANDKELEQLIDKLKI. Residues 283–319 form a disordered region; that stretch reads ETKMHEIEDKLKEEAHLKEDKHTTKVDKKEKQNDAND.

Belongs to the sirtuin family. Class I subfamily. Zn(2+) serves as cofactor.

Its subcellular location is the cytoplasm. The protein resides in the nucleus. The enzyme catalyses N(6)-acetyl-L-lysyl-[protein] + NAD(+) + H2O = 2''-O-acetyl-ADP-D-ribose + nicotinamide + L-lysyl-[protein]. NAD-dependent histone deacetylase that is involved in nuclear silencing events. Derepresses subtelomeric silencing and increases repression in nucleolar (rDNA) silencing. Its function is negatively regulated by active nuclear export. This Candida albicans (strain SC5314 / ATCC MYA-2876) (Yeast) protein is NAD-dependent protein deacetylase HST2 (HST2).